The primary structure comprises 116 residues: Large ribosomal subunit protein bL19 (116 aa).

This sequence belongs to the bacterial ribosomal protein bL19 family.

This protein is located at the 30S-50S ribosomal subunit interface and may play a role in the structure and function of the aminoacyl-tRNA binding site. The chain is Large ribosomal subunit protein bL19 from Streptomyces griseus subsp. griseus (strain JCM 4626 / CBS 651.72 / NBRC 13350 / KCC S-0626 / ISP 5235).